Consider the following 857-residue polypeptide: Bifunctional levopimaradiene synthase, chloroplastic (857 aa).

The N-terminal 33 residues, 1–33, are a transit peptide targeting the chloroplast; the sequence is MALPSSSLSSQIHTGATTQCIPHFHGSLNAGTS. Residue lysine 257 participates in substrate binding. Positions 390 and 392 each coordinate Mg(2+). The short motif at 390 to 393 is the DXDD motif element; it reads DIDD. Residue lysine 477 coordinates substrate. Residues aspartate 609, aspartate 613, asparagine 753, threonine 757, and glutamate 761 each contribute to the Mg(2+) site. Residues 609–613 carry the DDXXD motif motif; sequence DDLYD.

It belongs to the terpene synthase family. Tpsd subfamily. The cofactor is Mg(2+).

It is found in the plastid. The protein resides in the chloroplast. It catalyses the reaction (2E,6E,10E)-geranylgeranyl diphosphate = (+)-copalyl diphosphate. The enzyme catalyses (+)-copalyl diphosphate = abieta-7,13-diene + diphosphate. The catalysed reaction is (+)-copalyl diphosphate = abieta-8(14),12-diene + diphosphate. It carries out the reaction (+)-copalyl diphosphate = neoabietadiene + diphosphate. The protein operates within terpene metabolism; oleoresin biosynthesis. Functionally, involved in defensive oleoresin formation in conifers in response to insect attack or other injury. Involved in diterpene (C20) olefins biosynthesis. Bifunctional enzyme that catalyzes two sequential cyclizations of geranylgeranyl diphosphate (GGPP) to levopimaradiene. Levopimaradiene is the major products of the enzyme with abietadiene and neoabietadiene. No activity with farnesyl diphosphate (FPP) as substrate. The chain is Bifunctional levopimaradiene synthase, chloroplastic from Pinus banksiana (Jack pine).